The chain runs to 293 residues: Nucleotide-binding protein BC_5156 (293 aa).

Position 14–21 (14–21) interacts with ATP; it reads GMSGAGKT. 65–68 is a GTP binding site; that stretch reads DLRG.

This sequence belongs to the RapZ-like family.

Displays ATPase and GTPase activities. In Bacillus cereus (strain ATCC 14579 / DSM 31 / CCUG 7414 / JCM 2152 / NBRC 15305 / NCIMB 9373 / NCTC 2599 / NRRL B-3711), this protein is Nucleotide-binding protein BC_5156.